Consider the following 206-residue polypeptide: RNA-binding protein with multiple splicing 2 (206 aa).

Ser2 is subject to N-acetylserine. The RRM domain maps to 25-102 (RTLFVSGLPV…QTLRLEFAKA (78 aa)). Residues 35 to 45 (DIKPRELYLLF) are important for homodimerization.

Homodimer. Interacts with EEF2.

It localises to the cytoplasm. It is found in the nucleus. Its subcellular location is the stress granule. In terms of biological role, RNA-binding protein involved in the regulation of smooth muscle cell differentiation and proliferation in the gastrointestinal system. Binds NOG mRNA, the major inhibitor of the bone morphogenetic protein (BMP) pathway. Mediates an increase of NOG mRNA levels, thereby contributing to the negative regulation of BMP signaling pathway and promoting reversible dedifferentiation and proliferation of smooth muscle cells. Acts as a pre-mRNA alternative splicing regulator. Mediates ACTN1 and FLNB alternative splicing. Likely binds to mRNA tandem CAC trinucleotide or CA dinucleotide motifs. The protein is RNA-binding protein with multiple splicing 2 (Rbpms2) of Mus musculus (Mouse).